The sequence spans 328 residues: Lipoyl synthase (328 aa).

[4Fe-4S] cluster-binding residues include Cys57, Cys62, Cys68, Cys83, Cys87, Cys90, and Ser298. The region spanning 69–287 (WSRGTATFML…REEGLSLGFL (219 aa)) is the Radical SAM core domain.

Belongs to the radical SAM superfamily. Lipoyl synthase family. Requires [4Fe-4S] cluster as cofactor.

Its subcellular location is the cytoplasm. The enzyme catalyses [[Fe-S] cluster scaffold protein carrying a second [4Fe-4S](2+) cluster] + N(6)-octanoyl-L-lysyl-[protein] + 2 oxidized [2Fe-2S]-[ferredoxin] + 2 S-adenosyl-L-methionine + 4 H(+) = [[Fe-S] cluster scaffold protein] + N(6)-[(R)-dihydrolipoyl]-L-lysyl-[protein] + 4 Fe(3+) + 2 hydrogen sulfide + 2 5'-deoxyadenosine + 2 L-methionine + 2 reduced [2Fe-2S]-[ferredoxin]. It participates in protein modification; protein lipoylation via endogenous pathway; protein N(6)-(lipoyl)lysine from octanoyl-[acyl-carrier-protein]: step 2/2. In terms of biological role, catalyzes the radical-mediated insertion of two sulfur atoms into the C-6 and C-8 positions of the octanoyl moiety bound to the lipoyl domains of lipoate-dependent enzymes, thereby converting the octanoylated domains into lipoylated derivatives. The protein is Lipoyl synthase of Deinococcus geothermalis (strain DSM 11300 / CIP 105573 / AG-3a).